The following is a 223-amino-acid chain: Phosphoglycolate phosphatase (223 aa).

Asp10 serves as the catalytic Nucleophile. Residues Asp10 and Asp12 each contribute to the Mg(2+) site. Lys149 contacts substrate. 2 residues coordinate Mg(2+): Asp172 and Asp176.

This sequence belongs to the archaeal SPP-like hydrolase family. It depends on Mg(2+) as a cofactor.

It carries out the reaction 2-phosphoglycolate + H2O = glycolate + phosphate. In terms of biological role, catalyzes the dephosphorylation of 2-phosphoglycolate. The polypeptide is Phosphoglycolate phosphatase (Archaeoglobus fulgidus (strain ATCC 49558 / DSM 4304 / JCM 9628 / NBRC 100126 / VC-16)).